The sequence spans 145 residues: MSTIRLREFVERRPSIPPRLYITHQGRDIKGYYPGQLARLHFDYSGRKAPRPLIDLTIPLKSTTPYQPQLDQQTLIRSICSRRLSRPTDLWHNETSYQRDYSLPFYESGWDRKLGTISLHPRPVNSVPEVYCCGGERSSYARSTF.

This Mus musculus (Mouse) protein is Protein SPMIP3.